The sequence spans 149 residues: Flagellar assembly factor FliW (149 aa).

This sequence belongs to the FliW family. As to quaternary structure, interacts with translational regulator CsrA and flagellin(s).

The protein localises to the cytoplasm. Acts as an anti-CsrA protein, binds CsrA and prevents it from repressing translation of its target genes, one of which is flagellin. Binds to flagellin and participates in the assembly of the flagellum. The sequence is that of Flagellar assembly factor FliW from Thermotoga sp. (strain RQ2).